The sequence spans 204 residues: Urease accessory protein UreG (204 aa).

Residue 12–19 (GPVGSGKT) participates in GTP binding.

Belongs to the SIMIBI class G3E GTPase family. UreG subfamily. As to quaternary structure, homodimer. UreD, UreF and UreG form a complex that acts as a GTP-hydrolysis-dependent molecular chaperone, activating the urease apoprotein by helping to assemble the nickel containing metallocenter of UreC. The UreE protein probably delivers the nickel.

The protein resides in the cytoplasm. In terms of biological role, facilitates the functional incorporation of the urease nickel metallocenter. This process requires GTP hydrolysis, probably effectuated by UreG. This is Urease accessory protein UreG from Pseudomonas paraeruginosa (strain DSM 24068 / PA7) (Pseudomonas aeruginosa (strain PA7)).